A 517-amino-acid polypeptide reads, in one-letter code: UDP-N-acetylmuramyl-tripeptide synthetase (517 aa).

Residue threonine 48 coordinates UDP-N-acetyl-alpha-D-muramoyl-L-alanyl-D-glutamate. 125-131 (GTKGKTT) is an ATP binding site. UDP-N-acetyl-alpha-D-muramoyl-L-alanyl-D-glutamate-binding positions include 169–170 (TT), serine 196, and arginine 204. Lysine 238 bears the N6-carboxylysine mark.

The protein belongs to the MurCDEF family. MurE subfamily. Post-translationally, carboxylation is probably crucial for Mg(2+) binding and, consequently, for the gamma-phosphate positioning of ATP.

The protein resides in the cytoplasm. Its pathway is cell wall biogenesis; peptidoglycan biosynthesis. Its function is as follows. Catalyzes the addition of an amino acid to the nucleotide precursor UDP-N-acetylmuramoyl-L-alanyl-D-glutamate (UMAG) in the biosynthesis of bacterial cell-wall peptidoglycan. The protein is UDP-N-acetylmuramyl-tripeptide synthetase of Bifidobacterium longum (strain NCC 2705).